The following is a 147-amino-acid chain: MTVRQRRFAMVILVVIGVSIATGLGLKAFQENILFFYNPTQIMAGEVPTDTSIRVGGVVVNGSVKRESGNLDVQFDLTDMAQTVTVVYSGLLPDLFREGQGIVAMGKLGPNKVFEASEVLAKHDEEYMPPEVADSLAKTKANTEDKL.

Residues methionine 1–arginine 7 lie on the Cytoplasmic side of the membrane. Residues phenylalanine 8–alanine 28 traverse the membrane as a helical; Signal-anchor for type II membrane protein segment. Residues phenylalanine 29 to leucine 147 lie on the Periplasmic side of the membrane. Heme-binding residues include histidine 123 and tyrosine 127.

It belongs to the CcmE/CycJ family.

The protein resides in the cell inner membrane. Heme chaperone required for the biogenesis of c-type cytochromes. Transiently binds heme delivered by CcmC and transfers the heme to apo-cytochromes in a process facilitated by CcmF and CcmH. The chain is Cytochrome c-type biogenesis protein CcmE from Nitrosococcus oceani (strain ATCC 19707 / BCRC 17464 / JCM 30415 / NCIMB 11848 / C-107).